We begin with the raw amino-acid sequence, 313 residues long: Putative S-adenosyl-L-methionine-dependent methyltransferase MMAR_0955 (313 aa).

S-adenosyl-L-methionine-binding positions include D132 and 161–162 (DL).

Belongs to the UPF0677 family.

Exhibits S-adenosyl-L-methionine-dependent methyltransferase activity. The sequence is that of Putative S-adenosyl-L-methionine-dependent methyltransferase MMAR_0955 from Mycobacterium marinum (strain ATCC BAA-535 / M).